Consider the following 446-residue polypeptide: Chromosomal replication initiator protein DnaA (446 aa).

Positions 1–81 (MENISDLWNS…AKLAIRFIIP (81 aa)) are domain I, interacts with DnaA modulators. Residues 81 to 109 (PQSQAEEDIDLPSVKQKHAHDESNHLPQS) are domain II. Residues 110–326 (MLNPKYTFDT…GALIRVVAYS (217 aa)) form a domain III, AAA+ region region. Positions 154, 156, 157, and 158 each coordinate ATP. The tract at residues 327-446 (SLINKDMNAD…HVEEVKDILK (120 aa)) is domain IV, binds dsDNA.

Belongs to the DnaA family. In terms of assembly, oligomerizes as a right-handed, spiral filament on DNA at oriC.

It localises to the cytoplasm. Plays an essential role in the initiation and regulation of chromosomal replication. ATP-DnaA binds to the origin of replication (oriC) to initiate formation of the DNA replication initiation complex once per cell cycle. Binds the DnaA box (a 9 base pair repeat at the origin) and separates the double-stranded (ds)DNA. Forms a right-handed helical filament on oriC DNA; dsDNA binds to the exterior of the filament while single-stranded (ss)DNA is stabiized in the filament's interior. The ATP-DnaA-oriC complex binds and stabilizes one strand of the AT-rich DNA unwinding element (DUE), permitting loading of DNA polymerase. After initiation quickly degrades to an ADP-DnaA complex that is not apt for DNA replication. Binds acidic phospholipids. The protein is Chromosomal replication initiator protein DnaA of Bacillus mycoides (strain KBAB4) (Bacillus weihenstephanensis).